Here is a 142-residue protein sequence, read N- to C-terminus: MKGKYLLGILVILGALGYMVFGGLGRNLVYFLTPSEYLQDQARYQNRPVRLGGLVKPGTVQYDKDRLELRFVLTDGVAEVPVFHKGTPPGMFKEGQGVVVEGRFQEGVFQGTNLLVKHSETYQPPKEGWTPEEVRKLIEEAQ.

The Cytoplasmic segment spans residues 1–2 (MK). Residues 3–23 (GKYLLGILVILGALGYMVFGG) traverse the membrane as a helical; Signal-anchor for type II membrane protein segment. At 24 to 142 (LGRNLVYFLT…EVRKLIEEAQ (119 aa)) the chain is on the periplasmic side. H118 and Y122 together coordinate heme.

This sequence belongs to the CcmE/CycJ family.

It is found in the cell inner membrane. Heme chaperone required for the biogenesis of c-type cytochromes. Transiently binds heme delivered by CcmC and transfers the heme to apo-cytochromes in a process facilitated by CcmF and CcmH. This is Cytochrome c-type biogenesis protein CcmE from Thermus thermophilus (strain ATCC 27634 / DSM 579 / HB8).